A 641-amino-acid polypeptide reads, in one-letter code: Probable potassium transport system protein Kup (641 aa).

Residues 1 to 14 (MALDSESSASNRQG) are compositionally biased toward polar residues. The tract at residues 1–20 (MALDSESSASNRQGSRNEQD) is disordered. The next 12 membrane-spanning stretches (helical) occupy residues 29–49 (LCLT…LYAF), 69–89 (ILSL…LLII), 120–140 (VLIV…MITP), 156–176 (PQLT…LFMV), 188–208 (FGPI…NGII), 236–256 (VLGG…DMGH), 267–287 (FALV…LLLL), 307–327 (LVGL…SGVF), 355–375 (VYVP…VLHF), 384–404 (AFGI…FFVM), 410–430 (WNIL…LAFF), and 437–457 (ITDG…LMIT).

It belongs to the HAK/KUP transporter (TC 2.A.72) family.

It localises to the cell inner membrane. The catalysed reaction is K(+)(in) + H(+)(in) = K(+)(out) + H(+)(out). In terms of biological role, transport of potassium into the cell. Likely operates as a K(+):H(+) symporter. In Nitrosomonas eutropha (strain DSM 101675 / C91 / Nm57), this protein is Probable potassium transport system protein Kup.